The primary structure comprises 34 residues: Photosystem II reaction center protein M (34 aa).

A helical membrane pass occupies residues 5-25 (ILAFIATALFILIPTAFLLII).

Belongs to the PsbM family. PSII is composed of 1 copy each of membrane proteins PsbA, PsbB, PsbC, PsbD, PsbE, PsbF, PsbH, PsbI, PsbJ, PsbK, PsbL, PsbM, PsbT, PsbX, PsbY, PsbZ, Psb30/Ycf12, at least 3 peripheral proteins of the oxygen-evolving complex and a large number of cofactors. It forms dimeric complexes.

It is found in the plastid. The protein localises to the chloroplast thylakoid membrane. Functionally, one of the components of the core complex of photosystem II (PSII). PSII is a light-driven water:plastoquinone oxidoreductase that uses light energy to abstract electrons from H(2)O, generating O(2) and a proton gradient subsequently used for ATP formation. It consists of a core antenna complex that captures photons, and an electron transfer chain that converts photonic excitation into a charge separation. This subunit is found at the monomer-monomer interface. This chain is Photosystem II reaction center protein M, found in Lolium perenne (Perennial ryegrass).